A 474-amino-acid chain; its full sequence is Trehalose-6-phosphate synthase (474 aa).

Arg-10 lines the D-glucose 6-phosphate pocket. A UDP-alpha-D-glucose-binding site is contributed by 22 to 23 (GG). Positions 77 and 131 each coordinate D-glucose 6-phosphate. 2 residues coordinate UDP-alpha-D-glucose: Arg-263 and Lys-268. A D-glucose 6-phosphate-binding site is contributed by Arg-301. UDP-alpha-D-glucose is bound by residues Phe-340 and 366-370 (LVAKE).

It belongs to the glycosyltransferase 20 family. As to quaternary structure, homotetramer.

It carries out the reaction D-glucose 6-phosphate + UDP-alpha-D-glucose = alpha,alpha-trehalose 6-phosphate + UDP + H(+). It participates in glycan biosynthesis; trehalose biosynthesis. In terms of biological role, probably involved in the osmoprotection via the biosynthesis of trehalose. Catalyzes the transfer of glucose from UDP-alpha-D-glucose (UDP-Glc) to D-glucose 6-phosphate (Glc-6-P) to form trehalose-6-phosphate. Acts with retention of the anomeric configuration of the UDP-sugar donor. This is Trehalose-6-phosphate synthase from Escherichia coli O9:H4 (strain HS).